A 56-amino-acid polypeptide reads, in one-letter code: MRQLPGKAAKETRKMKRERKQQNKEGHNRVVTVAIPVCLAVFVMLIVYVYSATSKH.

The interval 1-27 is disordered; that stretch reads MRQLPGKAAKETRKMKRERKQQNKEGH. Residues 9–31 adopt a coiled-coil conformation; it reads AKETRKMKRERKQQNKEGHNRVV. Residues 30–50 form a helical membrane-spanning segment; that stretch reads VVTVAIPVCLAVFVMLIVYVY.

The protein belongs to the SMCO4 family.

The protein localises to the membrane. The protein is Single-pass membrane and coiled-coil domain-containing protein 4 homolog of Nematostella vectensis (Starlet sea anemone).